The primary structure comprises 707 residues: E3 ubiquitin-protein ligase Praja-2 (707 aa).

Positions 1-10 (MSQYTEKEPS) are enriched in basic and acidic residues. 3 disordered regions span residues 1–32 (MSQYTEKEPSVMDQESSKAAWPKPAGGYQTIT), 72–120 (PKEN…PSIA), and 250–314 (QNGQ…VRPK). Ser2 carries the N-acetylserine modification. Composition is skewed to polar residues over residues 74 to 83 (ENTSGSSSLD) and 109 to 119 (LNQSTESSPSI). Over residues 257 to 276 (RSSEDGVVRKRRQDDTDQGR) the composition is skewed to basic and acidic residues. Over residues 293 to 308 (EQNTSDRANHHGSSPE) the composition is skewed to polar residues. A phosphoserine mark is found at Ser306 and Ser320. At Ser339 the chain carries Phosphoserine; by PKA. 2 disordered regions span residues 379–405 (RVTQRETERNRVTSENGATASGRQESR) and 424–493 (EDSS…QTSL). Over residues 381–390 (TQRETERNRV) the composition is skewed to basic and acidic residues. At Thr385 the chain carries Phosphothreonine; by PKA. The segment covering 391-401 (TSENGATASGR) has biased composition (polar residues). Ser430 is modified (phosphoserine). A compositionally biased stretch (acidic residues) spans 465 to 481 (NDPELQSDSSGPEEENQ). A compositionally biased stretch (polar residues) spans 482–491 (ELSLQEGEQT). Positions 530-707 (DGNNNLEDDS…PANDNAEEAP (178 aa)) are interaction with PRKAR1A, PRKAR2A and PRKAR2B. Residues 549 to 569 (WSLFDGFADGLGVAEAISYVD) form a mediates interaction with TBC1D31 region. An RING-type; atypical zinc finger spans residues 633–674 (CPICCSEYIKDDIATELPCHHFFHKPCVSIWLQKSGTCPVCR). Positions 685 to 701 (SAAASSDPDPDASPAND) are enriched in low complexity. The interval 685-707 (SAAASSDPDPDASPANDNAEEAP) is disordered.

Binds ubiquitin-conjugating enzymes (E2s). In vitro, interacts with the ubiquitin-conjugating enzyme, UBE2D2. The phosphorylated form interacts with PRKAR1A, PRKAR2A and PRKAR2B. Binds the catalytic subunits of cAMP-dependent protein kinase. Interacts with MFHAS1. Interacts with TBC1D31; the interaction is direct and recruits PJA2 to centrosomes.

The protein localises to the cytoplasm. The protein resides in the cell membrane. It localises to the endoplasmic reticulum membrane. Its subcellular location is the golgi apparatus membrane. It is found in the synapse. The protein localises to the postsynaptic density. The protein resides in the cytoskeleton. It localises to the microtubule organizing center. Its subcellular location is the centrosome. The enzyme catalyses S-ubiquitinyl-[E2 ubiquitin-conjugating enzyme]-L-cysteine + [acceptor protein]-L-lysine = [E2 ubiquitin-conjugating enzyme]-L-cysteine + N(6)-ubiquitinyl-[acceptor protein]-L-lysine.. Its pathway is protein modification; protein ubiquitination. In terms of biological role, has E2-dependent E3 ubiquitin-protein ligase activity. Responsible for ubiquitination of cAMP-dependent protein kinase type I and type II-alpha/beta regulatory subunits and for targeting them for proteasomal degradation. Essential for PKA-mediated long-term memory processes. Through the ubiquitination of MFHAS1, positively regulates the TLR2 signaling pathway that leads to the activation of the downstream p38 and JNK MAP kinases and promotes the polarization of macrophages toward the pro-inflammatory M1 phenotype. Plays a role in ciliogenesis by ubiquitinating OFD1. In Mus musculus (Mouse), this protein is E3 ubiquitin-protein ligase Praja-2 (Pja2).